Consider the following 200-residue polypeptide: Potassium-transporting ATPase KdpC subunit (200 aa).

A helical transmembrane segment spans residues 9–31 (LVMLVALTALTGLVYPLAMTGVA). Positions 68 to 97 (GRPSATTAPDPQDSSKTVPSPYNAANSMGA) are disordered. Polar residues predominate over residues 71–96 (SATTAPDPQDSSKTVPSPYNAANSMG).

The protein belongs to the KdpC family. The system is composed of three essential subunits: KdpA, KdpB and KdpC.

It is found in the cell inner membrane. In terms of biological role, part of the high-affinity ATP-driven potassium transport (or Kdp) system, which catalyzes the hydrolysis of ATP coupled with the electrogenic transport of potassium into the cytoplasm. This subunit acts as a catalytic chaperone that increases the ATP-binding affinity of the ATP-hydrolyzing subunit KdpB by the formation of a transient KdpB/KdpC/ATP ternary complex. The polypeptide is Potassium-transporting ATPase KdpC subunit (Rhodopseudomonas palustris (strain BisA53)).